The chain runs to 995 residues: ATP-dependent RNA helicase DBP10 (995 aa).

Residues 1 to 120 (MAGVQKRKRD…TQTGDDEDDV (120 aa)) form a disordered region. Composition is skewed to acidic residues over residues 12 to 25 (EDQD…DDIA) and 37 to 50 (SESD…EVEA). The segment covering 71 to 81 (VNNKKKAENKD) has biased composition (basic and acidic residues). The residue at position 101 (serine 101) is a Phosphoserine. The Q motif signature appears at 137 to 165 (GSFPSFGLSKIVLNNIKRKGFRQPTPIQR). The 173-residue stretch at 168–340 (IPLILQSRDI…KAGLVNPVLV (173 aa)) folds into the Helicase ATP-binding domain. 181-188 (ARTGSGKT) is an ATP binding site. The DEAD box signature appears at 288–291 (DEAD). Disordered regions lie at residues 389-427 (LQNS…PAAN) and 889-973 (GSRE…EQIR). A phosphoserine mark is found at serine 398 and serine 400. Basic residues-rich tracts occupy residues 407 to 422 (QKKR…RKQK) and 914 to 924 (VRGKFKHKQMK). The region spanning 418–568 (FRKQKMPAAN…PMYDSLVDVM (151 aa)) is the Helicase C-terminal domain. The segment covering 964-973 (SELKSTEQIR) has biased composition (basic and acidic residues).

Belongs to the DEAD box helicase family. DDX54/DBP10 subfamily. As to quaternary structure, interacts with RRP1 and associates with pre-ribosomal particles.

It localises to the nucleus. Its subcellular location is the nucleolus. It catalyses the reaction ATP + H2O = ADP + phosphate + H(+). ATP-binding RNA helicase involved in the biogenesis of 60S ribosomal subunits and is required for the normal formation of 25S and 5.8S rRNAs. This chain is ATP-dependent RNA helicase DBP10 (DBP10), found in Saccharomyces cerevisiae (strain ATCC 204508 / S288c) (Baker's yeast).